The sequence spans 173 residues: NADH-ubiquinone oxidoreductase chain 6 (173 aa).

5 helical membrane-spanning segments follow: residues 1–21 (MTYF…AVAS), 27–47 (YGVV…LSLG), 48–68 (ASFV…VVFV), 87–107 (VIGY…IGGF), and 139–159 (WGAG…FVVL).

It belongs to the complex I subunit 6 family.

The protein localises to the mitochondrion membrane. It carries out the reaction a ubiquinone + NADH + 5 H(+)(in) = a ubiquinol + NAD(+) + 4 H(+)(out). Functionally, core subunit of the mitochondrial membrane respiratory chain NADH dehydrogenase (Complex I) that is believed to belong to the minimal assembly required for catalysis. Complex I functions in the transfer of electrons from NADH to the respiratory chain. The immediate electron acceptor for the enzyme is believed to be ubiquinone. The polypeptide is NADH-ubiquinone oxidoreductase chain 6 (MT-ND6) (Brachyramphus brevirostris (Kittlitz's murrelet)).